A 600-amino-acid chain; its full sequence is DNA polymerase alpha subunit B (600 aa).

Positions 107–165 (ETLLSSYTTPSKGPLKRVSSTPETPLTKRSVAARSPRQLLSPSSFSPSATPSQKYTSRT) are disordered. S126 is subject to Phosphoserine. T127 and T130 each carry phosphothreonine. Residues 139-159 (ARSPRQLLSPSSFSPSATPSQ) are compositionally biased toward low complexity. A phosphoserine mark is found at S141, S147, S152, and S154.

The protein belongs to the DNA polymerase alpha subunit B family. Component of the alpha DNA polymerase complex (also known as the alpha DNA polymerase-primase complex) consisting of four subunits: the catalytic subunit POLA1, the regulatory subunit POLA2, and the primase complex subunits PRIM1 and PRIM2 respectively. Within the complex, POLA1 directly interacts with PRIM2. Post-translationally, phosphorylated in a cell cycle-dependent manner, in G2/M phase.

The protein localises to the nucleus. In terms of biological role, accessory subunit of the DNA polymerase alpha complex (also known as the alpha DNA polymerase-primase complex) which plays an essential role in the initiation of DNA synthesis. During the S phase of the cell cycle, the DNA polymerase alpha complex (composed of a catalytic subunit POLA1, an accessory subunit POLA2 and two primase subunits, the catalytic subunit PRIM1 and the regulatory subunit PRIM2) is recruited to DNA at the replicative forks via direct interactions with MCM10 and WDHD1. The primase subunit of the polymerase alpha complex initiates DNA synthesis by oligomerising short RNA primers on both leading and lagging strands. These primers are initially extended by the polymerase alpha catalytic subunit and subsequently transferred to polymerase delta and polymerase epsilon for processive synthesis on the lagging and leading strand, respectively. This chain is DNA polymerase alpha subunit B (Pola2), found in Mus musculus (Mouse).